Here is a 398-residue protein sequence, read N- to C-terminus: Phosphoglycerate kinase (398 aa).

Residues 21–23 (DFN), arginine 36, 59–62 (HLGR), arginine 119, and arginine 157 each bind substrate. Residues lysine 208, glycine 296, glutamate 327, and 354–357 (GGDS) each bind ATP.

It belongs to the phosphoglycerate kinase family. Monomer.

Its subcellular location is the cytoplasm. The catalysed reaction is (2R)-3-phosphoglycerate + ATP = (2R)-3-phospho-glyceroyl phosphate + ADP. The protein operates within carbohydrate degradation; glycolysis; pyruvate from D-glyceraldehyde 3-phosphate: step 2/5. The polypeptide is Phosphoglycerate kinase (Streptococcus uberis (strain ATCC BAA-854 / 0140J)).